The sequence spans 962 residues: Vacuolar membrane protease (962 aa).

At 1–14 (MLAQFLRSLFRFRK) the chain is on the cytoplasmic side. Residues 15–35 (TTVSVLLVATYVVVFLLNVWD) form a helical membrane-spanning segment. Over 36–359 (RIRYQYSLPE…FVTASTKDLF (324 aa)) the chain is Vacuolar. N118 carries N-linked (GlcNAc...) asparagine glycosylation. H153 and D165 together coordinate Zn(2+). E197 acts as the Proton acceptor in catalysis. Residues E198, E223, and H297 each contribute to the Zn(2+) site. A helical membrane pass occupies residues 360–380 (TLNCVVLSVIPVIILVLEFVI). Residues 381 to 390 (QRRKTRERNP) lie on the Cytoplasmic side of the membrane. The chain crosses the membrane as a helical span at residues 391–411 (LLVWLRLPFSMFISYLVTATF). Topologically, residues 412 to 431 (RSSLFRVNPLIFSRDYVSPT) are vacuolar. The chain crosses the membrane as a helical span at residues 432–452 (IGFSFTFLILNYLVLSLLEYL). Over 453–460 (APSRDLKT) the chain is Cytoplasmic. Residues 461 to 481 (VSFVELFFGMWIALLWATIRL) form a helical membrane-spanning segment. Residues 482–489 (CTSKYTAT) are Vacuolar-facing. A helical transmembrane segment spans residues 490–510 (GVYPITVLYLLMSFGAIVGLV). Topologically, residues 511–601 (CSAFKRKHSV…VVSALNYDWS (91 aa)) are cytoplasmic. Positions 531–554 (APNTYSSIEESPQQATNTEAPNEN) are enriched in polar residues. The tract at residues 531 to 563 (APNTYSSIEESPQQATNTEAPNENSPEEHDERA) is disordered. The helical transmembrane segment at 602-622 (VQFLAVVPLASFFVIMCLSLI) threads the bilayer. Residues 623 to 639 (LDGIYQTCQEGFQATWN) lie on the Vacuolar side of the membrane. Residue N639 is glycosylated (N-linked (GlcNAc...) asparagine). Residues 640-660 (VSKISMLGGMLLAIPVLPFCY) form a helical membrane-spanning segment. K661 is a topological domain (cytoplasmic). A helical membrane pass occupies residues 662–682 (LNYFVSMVLLFAAASAGIFSF). Residues 683–962 (ERAPFTESSP…LVIVNDYIEL (280 aa)) are Vacuolar-facing. Residues N812 and N839 are each glycosylated (N-linked (GlcNAc...) asparagine).

The protein belongs to the peptidase M28 family. Requires Zn(2+) as cofactor.

Its subcellular location is the vacuole membrane. Its function is as follows. May be involved in vacuolar sorting and osmoregulation. The chain is Vacuolar membrane protease from Lachancea thermotolerans (strain ATCC 56472 / CBS 6340 / NRRL Y-8284) (Yeast).